The sequence spans 122 residues: Acidic phospholipase A2 4 (122 aa).

7 disulfide bridges follow: C26–C115, C28–C44, C43–C95, C49–C122, C50–C88, C57–C81, and C75–C86. Ca(2+) is bound by residues F27, G29, and G31. The active site involves H47. D48 contacts Ca(2+). D89 is an active-site residue.

This sequence belongs to the phospholipase A2 family. Group II subfamily. D49 sub-subfamily. It depends on Ca(2+) as a cofactor. As to expression, expressed by the venom gland.

It localises to the secreted. It catalyses the reaction a 1,2-diacyl-sn-glycero-3-phosphocholine + H2O = a 1-acyl-sn-glycero-3-phosphocholine + a fatty acid + H(+). Functionally, snake venom phospholipase A2 (PLA2) that has high lipolytic activity. PLA2 catalyzes the calcium-dependent hydrolysis of the 2-acyl groups in 3-sn-phosphoglycerides. This Craspedocephalus gramineus (Bamboo pit viper) protein is Acidic phospholipase A2 4.